We begin with the raw amino-acid sequence, 353 residues long: Melatonin receptor type 1A (353 aa).

The span at 1-15 (MKGNGSTLLNASQQA) shows a compositional bias: polar residues. The tract at residues 1 to 23 (MKGNGSTLLNASQQAPGVGEGGG) is disordered. At 1 to 32 (MKGNGSTLLNASQQAPGVGEGGGPRPSWLAST) the chain is on the extracellular side. 2 N-linked (GlcNAc...) asparagine glycosylation sites follow: Asn-4 and Asn-10. Residues 33–53 (LAFILIFTIVVDILGNLLVIL) form a helical membrane-spanning segment. Residues 54–66 (SVYRNKKLRNAGN) lie on the Cytoplasmic side of the membrane. The chain crosses the membrane as a helical span at residues 67–87 (IFVVSLAIADLVVAIYPYPLV). The Extracellular segment spans residues 88–105 (LTSIFNNGWNLGYLHCQI). Cysteines 103 and 180 form a disulfide. Residues 106–126 (SAFLMGLSVIGSIFNITGIAI) form a helical membrane-spanning segment. Topologically, residues 127-147 (NRYCYICHSLKYDRLYSNKNS) are cytoplasmic. A helical transmembrane segment spans residues 148 to 168 (LCYVFLIWVLTLVAIMPNLQT). The Extracellular portion of the chain corresponds to 169 to 190 (GTLQYDPRIYSCTFTQSVSSAY). A helical membrane pass occupies residues 191 to 211 (TIAVVVFHFIVPMIIVIFCYL). Topologically, residues 212 to 243 (RIWILVLQVRRRVKPDSKPRLKPQDFRNFVTM) are cytoplasmic. Residues 244–264 (FVVFVLFAICWAPLNFIGLIV) traverse the membrane as a helical segment. The Extracellular portion of the chain corresponds to 265–277 (ASDPATMAPRIPE). Residues 278–298 (WLFVASYYMAYFNSCLNAIIY) traverse the membrane as a helical segment. The Cytoplasmic segment spans residues 299-353 (GLLNQNFRQEYKRILVSLFTAKMCFVDSSNDPADKIKCKPAPLIANNNLIKVDSV).

It belongs to the G-protein coupled receptor 1 family. As to expression, at least in the brain, more precisely in the pars tuberalis and the suprachiasmatic nucleus.

It is found in the cell membrane. Its function is as follows. High affinity receptor for melatonin. Likely to mediate the reproductive and circadian actions of melatonin. The activity of this receptor is mediated by pertussis toxin sensitive G proteins that inhibit adenylate cyclase activity. Possibly involved in sleep induction, by melatonin activation of the potassium channel KCNMA1/BK and the dissociation of G-beta and G-gamma subunits, thereby decreasing synaptic transmission. The sequence is that of Melatonin receptor type 1A (MTNR1A) from Phodopus sungorus (Striped hairy-footed hamster).